Here is a 507-residue protein sequence, read N- to C-terminus: Tryptamine 4-monooxygenase (507 aa).

The first 19 residues, 1–19, serve as a signal peptide directing secretion; the sequence is MIVLLVSLVLAGCIYYANA. The interval 403 to 425 is disordered; that stretch reads PNPSEFRPERYLSSDGKPDPTVR. Residues 408–425 are compositionally biased toward basic and acidic residues; sequence FRPERYLSSDGKPDPTVR. Position 439 (C439) interacts with heme.

It belongs to the cytochrome P450 family. It depends on heme as a cofactor.

The catalysed reaction is tryptamine + AH2 + O2 = 4-hydroxytryptamine + A + H2O. The protein operates within secondary metabolite biosynthesis. Functionally, tryptamine 4-monooxygenase; part of the gene cluster that mediates the biosynthesis of psilocybin, a psychotropic tryptamine-derived natural product. The first step in the pathway is the decarboxylation of L-tryptophan to tryptamine by the decarboxylase psiD. PsiD does not decarboxylate phenylalanine, tyrosine, or 5-hydroxy- L -tryptophan (5-HTP). 4-hydroxy-L-tryptophan is accepted as substrate by psiD as well. The cytochrome P450 monooxygenase psiH then converts tryptamine to 4-hydroxytryptamine. The kinase psiK catalyzes the 4-O-phosphorylation step by converting 4-hydroxytryptamine into norbaeocystin. The methyltransferase psiM then catalyzes iterative methyl transfer to the amino group of norbaeocystin to yield psilocybin via a monomethylated intermediate, baeocystin. This chain is Tryptamine 4-monooxygenase, found in Psilocybe cyanescens.